A 1201-amino-acid chain; its full sequence is Autophagy-related protein 11 (1201 aa).

Positions 90–109 are disordered; sequence FPFLGRPSTPTKGSDNSTGT. The segment covering 97–109 has biased composition (polar residues); the sequence is STPTKGSDNSTGT. Positions 418-452 form a coiled coil; it reads LLRSDDMVRSLRDEKSKLEEKVKGSESRIRKLEDL. Disordered stretches follow at residues 458–503 and 525–545; these read HMGR…SEEK and KLQKDAHAERQSNTDKIQEVQ. The segment covering 485-499 has biased composition (low complexity); the sequence is RRSSVSSRRMSSNQS. The span at 525 to 542 shows a compositional bias: basic and acidic residues; that stretch reads KLQKDAHAERQSNTDKIQ. Coiled coils occupy residues 566-670 and 710-828; these read RRFL…ALQA and SAKA…WKER. 2 disordered regions span residues 1052–1076 and 1115–1201; these read SMNGANPDRRSIGEASDGTSFDDEN and DARG…LQGP. Positions 1133–1166 are enriched in polar residues; sequence RTLSKSLDSRRNSSNSKKGPATPSQRGNDSTTDL. A compositionally biased stretch (basic and acidic residues) spans 1191-1201; sequence EEVRRDQLQGP.

It belongs to the ATG11 family. As to quaternary structure, homodimer and potential homooligomers.

The protein localises to the preautophagosomal structure membrane. Selective autophagy-specific protein required for pexophagy and mitophagy. In contrast to its Saccharomyces cerevisiae ATG11 ortholog, is not involved in non-selective autophagy nor in cytoplasm to vacuole transport (Cvt). The sequence is that of Autophagy-related protein 11 from Aspergillus oryzae (strain ATCC 42149 / RIB 40) (Yellow koji mold).